Consider the following 168-residue polypeptide: Zinc-finger homeodomain protein 14 (168 aa).

The ZF-HD dimerization-type; degenerate zinc-finger motif lies at 7–51 (YRECMRNHAAKLGSYAIDGCREYSQPSTGDLCVACGCHRSYHRRI). A coiled-coil region spans residues 76 to 103 (ARLKWKTAEERNEEEEDDTEETSTEEKM). Positions 82 to 112 (TAEERNEEEEDDTEETSTEEKMTVQRRRKSK) are disordered. Positions 86 to 98 (RNEEEEDDTEETS) are enriched in acidic residues. The segment at residues 106-168 (QRRRKSKFTA…WVNNNKKFYH (63 aa)) is a DNA-binding region (homeobox).

As to quaternary structure, homo- and heterodimer with other ZFHD proteins. Interacts with ZHD11. As to expression, mostly expressed in flowers and stems.

It is found in the nucleus. In terms of biological role, putative transcription factor. The protein is Zinc-finger homeodomain protein 14 (ZHD14) of Arabidopsis thaliana (Mouse-ear cress).